We begin with the raw amino-acid sequence, 155 residues long: Cell division protein SepF (155 aa).

Residues 16-35 are compositionally biased toward acidic residues; that stretch reads TEDEEEDVETVEESEDVEEE. The segment at 16–44 is disordered; that stretch reads TEDEEEDVETVEESEDVEEEESKKPQFIQ.

It belongs to the SepF family. As to quaternary structure, homodimer. Interacts with FtsZ.

It is found in the cytoplasm. In terms of biological role, cell division protein that is part of the divisome complex and is recruited early to the Z-ring. Probably stimulates Z-ring formation, perhaps through the cross-linking of FtsZ protofilaments. Its function overlaps with FtsA. This is Cell division protein SepF from Acetivibrio thermocellus (strain ATCC 27405 / DSM 1237 / JCM 9322 / NBRC 103400 / NCIMB 10682 / NRRL B-4536 / VPI 7372) (Clostridium thermocellum).